An 862-amino-acid chain; its full sequence is DNA mismatch repair protein MutS (862 aa).

608–615 (GPNMAGKS) provides a ligand contact to ATP.

It belongs to the DNA mismatch repair MutS family.

In terms of biological role, this protein is involved in the repair of mismatches in DNA. It is possible that it carries out the mismatch recognition step. This protein has a weak ATPase activity. The polypeptide is DNA mismatch repair protein MutS (Borreliella afzelii (strain PKo) (Borrelia afzelii)).